Reading from the N-terminus, the 957-residue chain is Plasma membrane ATPase 1 (957 aa).

The Cytoplasmic portion of the chain corresponds to 1-66 (MGEEKPEVLD…EKKDSKLLKF (66 aa)). Residues 67–86 (LGFMWNPLSWVMEAAAIMAI) traverse the membrane as a helical segment. Residues 87 to 98 (ALANGGGKPPDW) lie on the Extracellular side of the membrane. Residues 99–119 (QDFVGIITLLIINSTISFIEE) form a helical membrane-spanning segment. Over 120 to 248 (NNAGNAAAAL…GHFQKVLTAI (129 aa)) the chain is Cytoplasmic. A helical membrane pass occupies residues 249 to 269 (GNFCICSIAVGMIIEIIVMYP). Residues 270–279 (IQHRAYRPGI) are Extracellular-facing. A helical membrane pass occupies residues 280–301 (DNLLVLLIGGIPIAMPTVLSVT). The Cytoplasmic segment spans residues 302–648 (MAIGSHRLAQ…TSRAIFQRMK (347 aa)). Catalysis depends on Asp334, which acts as the 4-aspartylphosphate intermediate. Mg(2+) contacts are provided by Asp593 and Asp597. Residues 649-670 (NYTIYAVSITIRIVLGFMLLAL) form a helical membrane-spanning segment. Residues 671–675 (IWKFD) lie on the Extracellular side of the membrane. The chain crosses the membrane as a helical span at residues 676 to 698 (FPPFMVLIIAILNDGTIMTISKD). The Cytoplasmic portion of the chain corresponds to 699 to 714 (RVKPSPLPDSWKLAEI). A helical transmembrane segment spans residues 715-735 (FTTGIVLGGYLAMMTVIFFWA). The Extracellular portion of the chain corresponds to 736-760 (AYKTNFFPHVFGVSTLEKTATDDFR). A helical transmembrane segment spans residues 761–781 (KLASAIYLQVSIISQALIFVT). Topologically, residues 782–793 (RSRSWSFVERPG) are cytoplasmic. Residues 794-814 (FLLVIAFVIAQLVATLIAVYA) form a helical membrane-spanning segment. Residues 815 to 823 (NWSFAAIEG) are Extracellular-facing. A helical membrane pass occupies residues 824–844 (IGWGWAGVIWIYNLVFYIPLD). The Cytoplasmic segment spans residues 845 to 957 (IIKFFIRYAL…IETIQQAYTV (113 aa)).

The protein belongs to the cation transport ATPase (P-type) (TC 3.A.3) family. Type IIIA subfamily. As to expression, expressed in roots, stems, leaves from both vegetative and flowering plants, and flowers at early and late stages of development with highest expression levels found in flowers and stem.

The protein resides in the cell membrane. The catalysed reaction is ATP + H2O + H(+)(in) = ADP + phosphate + 2 H(+)(out). In terms of biological role, the plasma membrane ATPase of plants and fungi is a hydrogen ion pump. The proton gradient it generates drives the active transport of nutrients by H(+)-symport. The resulting external acidification and/or internal alkinization may mediate growth responses. The sequence is that of Plasma membrane ATPase 1 (PMA1) from Nicotiana plumbaginifolia (Leadwort-leaved tobacco).